The primary structure comprises 277 residues: Phosphatidylglycerol--prolipoprotein diacylglyceryl transferase (277 aa).

A run of 4 helical transmembrane segments spans residues 16–36 (LGPI…LFGW), 58–78 (FLTW…VLFY), 93–113 (IWSG…AILL), and 119–139 (GFSP…GLFL). Arg141 serves as a coordination point for a 1,2-diacyl-sn-glycero-3-phospho-(1'-sn-glycerol). 3 helical membrane-spanning segments follow: residues 182–202 (AALE…KPAV), 207–227 (GTLS…GEVF), and 239–259 (FGVT…LWIL).

The protein belongs to the Lgt family.

Its subcellular location is the cell inner membrane. It catalyses the reaction L-cysteinyl-[prolipoprotein] + a 1,2-diacyl-sn-glycero-3-phospho-(1'-sn-glycerol) = an S-1,2-diacyl-sn-glyceryl-L-cysteinyl-[prolipoprotein] + sn-glycerol 1-phosphate + H(+). It functions in the pathway protein modification; lipoprotein biosynthesis (diacylglyceryl transfer). Functionally, catalyzes the transfer of the diacylglyceryl group from phosphatidylglycerol to the sulfhydryl group of the N-terminal cysteine of a prolipoprotein, the first step in the formation of mature lipoproteins. The chain is Phosphatidylglycerol--prolipoprotein diacylglyceryl transferase from Rhodospirillum centenum (strain ATCC 51521 / SW).